Reading from the N-terminus, the 129-residue chain is D-ribose pyranase 1 (129 aa).

Histidine 20 acts as the Proton donor in catalysis. Residues aspartate 28, histidine 96, and 118-120 (YSN) contribute to the substrate site.

It belongs to the RbsD / FucU family. RbsD subfamily. Homodecamer.

It localises to the cytoplasm. The enzyme catalyses beta-D-ribopyranose = beta-D-ribofuranose. Its pathway is carbohydrate metabolism; D-ribose degradation; D-ribose 5-phosphate from beta-D-ribopyranose: step 1/2. In terms of biological role, catalyzes the interconversion of beta-pyran and beta-furan forms of D-ribose. The chain is D-ribose pyranase 1 from Rubrobacter xylanophilus (strain DSM 9941 / JCM 11954 / NBRC 16129 / PRD-1).